A 621-amino-acid chain; its full sequence is Chaperone protein HscA homolog (621 aa).

This sequence belongs to the heat shock protein 70 family.

Functionally, chaperone involved in the maturation of iron-sulfur cluster-containing proteins. Has a low intrinsic ATPase activity which is markedly stimulated by HscB. The protein is Chaperone protein HscA homolog of Ralstonia nicotianae (strain ATCC BAA-1114 / GMI1000) (Ralstonia solanacearum).